The sequence spans 633 residues: Biosynthetic arginine decarboxylase (633 aa).

Lysine 101 carries the post-translational modification N6-(pyridoxal phosphate)lysine. Residue 284–294 (VDVGGGLGVDY) participates in substrate binding.

The protein belongs to the Orn/Lys/Arg decarboxylase class-II family. SpeA subfamily. Mg(2+) serves as cofactor. Requires pyridoxal 5'-phosphate as cofactor.

The enzyme catalyses L-arginine + H(+) = agmatine + CO2. Its pathway is amine and polyamine biosynthesis; agmatine biosynthesis; agmatine from L-arginine: step 1/1. In terms of biological role, catalyzes the biosynthesis of agmatine from arginine. This chain is Biosynthetic arginine decarboxylase, found in Aeromonas salmonicida (strain A449).